The following is a 231-amino-acid chain: Cytochrome c oxidase subunit 2 (231 aa).

Topologically, residues 1–14 (MATPAQLGLQNATS) are mitochondrial intermembrane. The helical transmembrane segment at 15–45 (PIMEELIAFHDHALMIIFLISSLVLYIISLM) threads the bilayer. Topologically, residues 46–59 (LTTKLTHTSTMNAQ) are mitochondrial matrix. A helical transmembrane segment spans residues 60 to 87 (EIEMIWTILPAIILIMIALPSLRILYMT). The Mitochondrial intermembrane segment spans residues 88-231 (DEFNKPYLTL…WASYLYIVSL (144 aa)). Histidine 161, cysteine 196, glutamate 198, cysteine 200, histidine 204, and methionine 207 together coordinate Cu cation. Residue glutamate 198 participates in Mg(2+) binding.

Belongs to the cytochrome c oxidase subunit 2 family. In terms of assembly, component of the cytochrome c oxidase (complex IV, CIV), a multisubunit enzyme composed of 14 subunits. The complex is composed of a catalytic core of 3 subunits MT-CO1, MT-CO2 and MT-CO3, encoded in the mitochondrial DNA, and 11 supernumerary subunits COX4I, COX5A, COX5B, COX6A, COX6B, COX6C, COX7A, COX7B, COX7C, COX8 and NDUFA4, which are encoded in the nuclear genome. The complex exists as a monomer or a dimer and forms supercomplexes (SCs) in the inner mitochondrial membrane with NADH-ubiquinone oxidoreductase (complex I, CI) and ubiquinol-cytochrome c oxidoreductase (cytochrome b-c1 complex, complex III, CIII), resulting in different assemblies (supercomplex SCI(1)III(2)IV(1) and megacomplex MCI(2)III(2)IV(2)). Found in a complex with TMEM177, COA6, COX18, COX20, SCO1 and SCO2. Interacts with TMEM177 in a COX20-dependent manner. Interacts with COX20. Interacts with COX16. Cu cation is required as a cofactor.

It is found in the mitochondrion inner membrane. It carries out the reaction 4 Fe(II)-[cytochrome c] + O2 + 8 H(+)(in) = 4 Fe(III)-[cytochrome c] + 2 H2O + 4 H(+)(out). Component of the cytochrome c oxidase, the last enzyme in the mitochondrial electron transport chain which drives oxidative phosphorylation. The respiratory chain contains 3 multisubunit complexes succinate dehydrogenase (complex II, CII), ubiquinol-cytochrome c oxidoreductase (cytochrome b-c1 complex, complex III, CIII) and cytochrome c oxidase (complex IV, CIV), that cooperate to transfer electrons derived from NADH and succinate to molecular oxygen, creating an electrochemical gradient over the inner membrane that drives transmembrane transport and the ATP synthase. Cytochrome c oxidase is the component of the respiratory chain that catalyzes the reduction of oxygen to water. Electrons originating from reduced cytochrome c in the intermembrane space (IMS) are transferred via the dinuclear copper A center (CU(A)) of subunit 2 and heme A of subunit 1 to the active site in subunit 1, a binuclear center (BNC) formed by heme A3 and copper B (CU(B)). The BNC reduces molecular oxygen to 2 water molecules using 4 electrons from cytochrome c in the IMS and 4 protons from the mitochondrial matrix. This Aotus nigriceps (Black-headed night monkey) protein is Cytochrome c oxidase subunit 2 (MT-CO2).